Consider the following 277-residue polypeptide: Digeranylgeranylglyceryl phosphate synthase (277 aa).

7 helical membrane-spanning segments follow: residues 16–36 (ILAGVVGILGSLVAYEGIPSI), 40–60 (GLVFLVVYLGCSAGNTINDYF), 101–121 (FLGVEALLFALGAYALTFIYA), 129–149 (FIGNVAVALLTAATPIYGALG), 153–173 (VGLAGYLAICAFLVNVSREIM), 205–225 (IFGVLTVITSFLPVKVGIGLG), and 257–277 (LKIATFIAVISFLLGALTKGV).

It belongs to the UbiA prenyltransferase family. DGGGP synthase subfamily. Mg(2+) serves as cofactor.

The protein localises to the cell membrane. It catalyses the reaction sn-3-O-(geranylgeranyl)glycerol 1-phosphate + (2E,6E,10E)-geranylgeranyl diphosphate = 2,3-bis-O-(geranylgeranyl)-sn-glycerol 1-phosphate + diphosphate. It participates in membrane lipid metabolism; glycerophospholipid metabolism. Prenyltransferase that catalyzes the transfer of the geranylgeranyl moiety of geranylgeranyl diphosphate (GGPP) to the C2 hydroxyl of (S)-3-O-geranylgeranylglyceryl phosphate (GGGP). This reaction is the second ether-bond-formation step in the biosynthesis of archaeal membrane lipids. The sequence is that of Digeranylgeranylglyceryl phosphate synthase from Pyrococcus abyssi (strain GE5 / Orsay).